The primary structure comprises 230 residues: UPF0173 metal-dependent hydrolase Sca_1312 (230 aa).

The protein belongs to the UPF0173 family.

This chain is UPF0173 metal-dependent hydrolase Sca_1312, found in Staphylococcus carnosus (strain TM300).